The sequence spans 249 residues: Type I iodothyronine deiodinase (249 aa).

The Extracellular segment spans residues 1 to 12 (MELPLPGLWLKR). The chain crosses the membrane as a helical; Signal-anchor for type III membrane protein span at residues 13–33 (LWVLFQVALHVAMGKVLMTLF). Over 34 to 249 (PGRVKQDILA…VRAVLEKLHS (216 aa)) the chain is Cytoplasmic. Residue selenocysteine 126 is part of the active site. Selenocysteine 126 is a non-standard amino acid (selenocysteine).

This sequence belongs to the iodothyronine deiodinase family. As to quaternary structure, predominantly monomer. Can form homodimers but homodimerization is not essential for enzyme activity.

It localises to the cell membrane. It is found in the endoplasmic reticulum membrane. Its subcellular location is the basolateral cell membrane. It carries out the reaction 3,3',5-triiodo-L-thyronine + iodide + A + H(+) = L-thyroxine + AH2. It catalyses the reaction 3,3',5'-triiodo-L-thyronine + iodide + A + H(+) = L-thyroxine + AH2. The enzyme catalyses 3,3'-diiodo-L-thyronine + iodide + A + H(+) = 3,3',5'-triiodo-L-thyronine + AH2. The catalysed reaction is 3,3'-diiodo-L-thyronine + iodide + A + H(+) = 3,3',5-triiodo-L-thyronine + AH2. It carries out the reaction 3'-iodo-L-thyronine + iodide + A + H(+) = 3',5'-diiodo-L-thyronine + AH2. It catalyses the reaction 3-iodo-L-thyronine + iodide + A + H(+) = 3,5-diiodo-L-thyronine + AH2. The enzyme catalyses 3-iodo-L-thyronine + iodide + A + H(+) = 3,3'-diiodo-L-thyronine + AH2. The catalysed reaction is 3,3'-diiodothyronamine + iodide + A + H(+) = 3,3',5'-triiodothyronamine + AH2. It carries out the reaction 3'-iodothyronamine + iodide + A + H(+) = 3',5'-diiodothyronamine + AH2. It catalyses the reaction 3-iodothyronamine + iodide + A + H(+) = 3,3'-diiodothyronamine + AH2. The enzyme catalyses 3,3'-diiodothyronamine + iodide + A + H(+) = 3,3',5-triiodothyronamine + AH2. The catalysed reaction is 3-iodothyronamine + iodide + A + H(+) = 3,5-diiodothyronamine + AH2. It carries out the reaction 3,3'-diiodo-L-thyronine sulfate + iodide + A + H(+) = 3,3',5'-triiodo-L-thyronine sulfate + AH2. It catalyses the reaction 3,3',5'-triiodo-L-thyronine sulfate + iodide + A + H(+) = L-thyroxine sulfate + AH2. The enzyme catalyses 3,3'-diiodo-L-thyronine sulfate + iodide + A + H(+) = 3,3',5-triiodo-L-thyronine sulfate + AH2. In terms of biological role, plays a crucial role in the metabolism of thyroid hormones (TH) and has specific roles in TH activation and inactivation by deiodination. Catalyzes the deiodination of L-thyroxine (T4) to 3,5,3'-triiodothyronine (T3) and 3,3',5'-triiodothyronine (rT3) to 3,3'-diiodothyronine (3,3'-T2) via outer-ring deiodination (ORD). Catalyzes the deiodination of T4 to rT3, T3 to 3,3'-T2, 3,5-diiodothyronine (3,5-T2) to 3-monoiodothyronine (3-T1) and 3,3'-T2 to 3-T1 via inner-ring deiodination (IRD). Catalyzes the deiodination of 3',5'-diiodothyronine (3',5'-T2) to 3'-monoiodothyronine (3'-T1) via ORD. Catalyzes the phenolic ring deiodinations of 3,3',5'-triiodothyronamine, 3',5'-diiodothyronamine and 3,3'-diiodothyronamine as well as tyrosyl ring deiodinations of 3,5,3'-triiodothyronamine and 3,5-diiodothyronamine. Catalyzes the deiodination of L-thyroxine sulfate and 3,3',5-triiodo-L-thyronine sulfate via IRD and of 3,3',5'-triiodo-L-thyronine sulfate via ORD. The chain is Type I iodothyronine deiodinase (DIO1) from Sus scrofa (Pig).